Reading from the N-terminus, the 287-residue chain is MFARLPLYLRLVRMDKPIGSLLLLWPTLNALWIASDGRPSLPLLVIFTVGTVLMRSAGCAINDYADRDFDRYVRRTENRPITSGKIRAWEAVALAAALSLLAFLLILPLNALTKELSVAALFVAGSYPFTKRFFAIPQAYLGIAFGFGIPMAFAAIQNHVPMLAWVMLLANVFWSVAYDTEYAMVDRDDDIKIGIRTSALTFGRFDVAAIMLCYAVTLGIYVGIGVLLGFGALYWLGWAAAAGCAIYHYTLIRNRERMACFAAFRHNNWLGGALFAGIAAHYAATWF.

6 helical membrane passes run 41–61 (LPLL…GCAI), 92–112 (VALA…LNAL), 133–153 (FFAI…PMAF), 160–180 (VPML…AYDT), 218–238 (LGIY…WLGW), and 267–287 (NNWL…ATWF).

Belongs to the UbiA prenyltransferase family. Mg(2+) is required as a cofactor.

The protein resides in the cell inner membrane. The catalysed reaction is all-trans-octaprenyl diphosphate + 4-hydroxybenzoate = 4-hydroxy-3-(all-trans-octaprenyl)benzoate + diphosphate. It participates in cofactor biosynthesis; ubiquinone biosynthesis. Its function is as follows. Catalyzes the prenylation of para-hydroxybenzoate (PHB) with an all-trans polyprenyl group. Mediates the second step in the final reaction sequence of ubiquinone-8 (UQ-8) biosynthesis, which is the condensation of the polyisoprenoid side chain with PHB, generating the first membrane-bound Q intermediate 3-octaprenyl-4-hydroxybenzoate. This Paraburkholderia xenovorans (strain LB400) protein is 4-hydroxybenzoate octaprenyltransferase.